The chain runs to 212 residues: Thymidylate kinase (212 aa).

An ATP-binding site is contributed by 11–18; it reads GIEGSGKT.

The protein belongs to the thymidylate kinase family.

The enzyme catalyses dTMP + ATP = dTDP + ADP. Functionally, phosphorylation of dTMP to form dTDP in both de novo and salvage pathways of dTTP synthesis. The polypeptide is Thymidylate kinase (Buchnera aphidicola subsp. Baizongia pistaciae (strain Bp)).